A 335-amino-acid chain; its full sequence is Pro-cathepsin H (335 aa).

A signal peptide spans 1–22; sequence MWATLPLLCAGAWLLGVPVCGA. Positions 23–97 are cleaved as a propeptide — activation peptide; that stretch reads AELCVNSLEK…AEIKHKYLWS (75 aa). N101 carries N-linked (GlcNAc...) asparagine glycosylation. Intrachain disulfides connect C102/C327, C138/C181, C172/C214, and C272/C322. The propeptide occupies 106 to 115; that stretch reads KSNYLRGTGP. Residue C141 is part of the active site. An N-linked (GlcNAc...) asparagine glycan is attached at N230. Active-site residues include H281 and N301.

Belongs to the peptidase C1 family. As to quaternary structure, composed of a mini chain and a large chain. The large chain may be split into heavy and light chain. All chains are held together by disulfide bonds.

Its subcellular location is the lysosome. It carries out the reaction Hydrolysis of proteins, acting as an aminopeptidase (notably, cleaving Arg-|-Xaa bonds) as well as an endopeptidase.. Its function is as follows. Important for the overall degradation of proteins in lysosomes. The chain is Pro-cathepsin H (CTSH) from Homo sapiens (Human).